Reading from the N-terminus, the 157-residue chain is Protein Smg homolog (157 aa).

It belongs to the Smg family.

This is Protein Smg homolog from Tolumonas auensis (strain DSM 9187 / NBRC 110442 / TA 4).